The chain runs to 320 residues: 4-hydroxy-3-methylbut-2-enyl diphosphate reductase (320 aa).

C12 provides a ligand contact to [4Fe-4S] cluster. (2E)-4-hydroxy-3-methylbut-2-enyl diphosphate-binding residues include H41 and H74. Residues H41 and H74 each contribute to the dimethylallyl diphosphate site. H41 and H74 together coordinate isopentenyl diphosphate. Residue C96 coordinates [4Fe-4S] cluster. Position 124 (H124) interacts with (2E)-4-hydroxy-3-methylbut-2-enyl diphosphate. H124 is a dimethylallyl diphosphate binding site. H124 contacts isopentenyl diphosphate. The active-site Proton donor is E126. T167 contacts (2E)-4-hydroxy-3-methylbut-2-enyl diphosphate. C197 contributes to the [4Fe-4S] cluster binding site. S225, S226, N227, and S269 together coordinate (2E)-4-hydroxy-3-methylbut-2-enyl diphosphate. Dimethylallyl diphosphate is bound by residues S225, S226, N227, and S269. Positions 225, 226, 227, and 269 each coordinate isopentenyl diphosphate.

It belongs to the IspH family. [4Fe-4S] cluster is required as a cofactor.

It carries out the reaction isopentenyl diphosphate + 2 oxidized [2Fe-2S]-[ferredoxin] + H2O = (2E)-4-hydroxy-3-methylbut-2-enyl diphosphate + 2 reduced [2Fe-2S]-[ferredoxin] + 2 H(+). The enzyme catalyses dimethylallyl diphosphate + 2 oxidized [2Fe-2S]-[ferredoxin] + H2O = (2E)-4-hydroxy-3-methylbut-2-enyl diphosphate + 2 reduced [2Fe-2S]-[ferredoxin] + 2 H(+). The protein operates within isoprenoid biosynthesis; dimethylallyl diphosphate biosynthesis; dimethylallyl diphosphate from (2E)-4-hydroxy-3-methylbutenyl diphosphate: step 1/1. Its pathway is isoprenoid biosynthesis; isopentenyl diphosphate biosynthesis via DXP pathway; isopentenyl diphosphate from 1-deoxy-D-xylulose 5-phosphate: step 6/6. Functionally, catalyzes the conversion of 1-hydroxy-2-methyl-2-(E)-butenyl 4-diphosphate (HMBPP) into a mixture of isopentenyl diphosphate (IPP) and dimethylallyl diphosphate (DMAPP). Acts in the terminal step of the DOXP/MEP pathway for isoprenoid precursor biosynthesis. This chain is 4-hydroxy-3-methylbut-2-enyl diphosphate reductase, found in Francisella tularensis subsp. novicida (strain U112).